We begin with the raw amino-acid sequence, 470 residues long: Cyclin-dependent kinase E-1 (470 aa).

Positions 25 to 333 (YNLVGKIGEG…ASQALEHEYF (309 aa)) constitute a Protein kinase domain. Residues 31–39 (IGEGTYGLV) and K55 each bind ATP. Residue Y36 is modified to Phosphotyrosine. The Proton acceptor role is filled by D154. The disordered stretch occupies residues 428–470 (LNPSVPLQQQRGMAQPHQQQQLRRKDPGMGMSGYAPPNKSRRL). Residues 432–448 (VPLQQQRGMAQPHQQQQ) are compositionally biased toward polar residues.

Belongs to the protein kinase superfamily. CMGC Ser/Thr protein kinase family. CDC2/CDKX subfamily. In terms of assembly, interacts with MED14, HDA19 and LUG. Interacts with KIN10. Expressed in roots, leaves and stems. Expressed in young dividing tissue, such as shoot and root tips, lateral root primordia, young leaves and flowers. Expressed in the inflorescence meristem, inflorescence stem and young flowers.

The protein resides in the nucleus. The catalysed reaction is L-seryl-[protein] + ATP = O-phospho-L-seryl-[protein] + ADP + H(+). The enzyme catalyses L-threonyl-[protein] + ATP = O-phospho-L-threonyl-[protein] + ADP + H(+). It carries out the reaction [DNA-directed RNA polymerase] + ATP = phospho-[DNA-directed RNA polymerase] + ADP + H(+). Functionally, involved in cell differentiation. Required for the specification of stamen and carpel identities and for the proper termination of stem cells in the floral meristem. This is Cyclin-dependent kinase E-1 (CDKE-1) from Arabidopsis thaliana (Mouse-ear cress).